Consider the following 171-residue polypeptide: CDP-archaeol synthase (171 aa).

4 helical membrane-spanning segments follow: residues 11-31, 65-85, 129-149, and 151-171; these read VLYV…GLVF, VGLV…IGVI, LILV…IMLI, and LVLH…DVWY.

It belongs to the CDP-archaeol synthase family. Mg(2+) is required as a cofactor.

Its subcellular location is the cell membrane. It catalyses the reaction 2,3-bis-O-(geranylgeranyl)-sn-glycerol 1-phosphate + CTP + H(+) = CDP-2,3-bis-O-(geranylgeranyl)-sn-glycerol + diphosphate. It functions in the pathway membrane lipid metabolism; glycerophospholipid metabolism. In terms of biological role, catalyzes the formation of CDP-2,3-bis-(O-geranylgeranyl)-sn-glycerol (CDP-archaeol) from 2,3-bis-(O-geranylgeranyl)-sn-glycerol 1-phosphate (DGGGP) and CTP. This reaction is the third ether-bond-formation step in the biosynthesis of archaeal membrane lipids. This chain is CDP-archaeol synthase, found in Methanothermobacter thermautotrophicus (strain ATCC 29096 / DSM 1053 / JCM 10044 / NBRC 100330 / Delta H) (Methanobacterium thermoautotrophicum).